The following is a 1074-amino-acid chain: Insulin receptor substrate 2-A (1074 aa).

Residues 1–64 form a disordered region; that stretch reads MAGVLCPTEE…PPASAAEDDV (64 aa). 2 short sequence motifs (YXXM motif) span residues 33–36 and 145–148; these read YRRM and YFAM. Residues 63-168 enclose the PH domain; it reads DVRKRGYLRK…WYQALSELIN (106 aa). In terms of domain architecture, IRS-type PTB spans 193–297; the sequence is FKEVWQVNVK…DTMKALKAYS (105 aa). Disordered stretches follow at residues 326-370, 426-461, and 475-510; these read PPSQ…RPFR, CSSS…SDEY, and SNTP…SRDD. Over residues 347 to 361 the composition is skewed to polar residues; it reads SAKNNSFRFRTSSEG. 2 stretches are compositionally biased toward low complexity: residues 426–435 and 442–454; these read CSSSGHGSAS and SSSS…SDGG. Residues 475–504 show a composition bias toward polar residues; it reads SNTPDSLGNTPPIQEENTLSDYMSMSTHSQ. Short sequence motifs (YXXM motif) lie at residues 496-499, 592-595, 605-608, 631-634, 663-666, and 710-713; these read YMSM, YMPM, YLPM, YMMM, YMDM, and YVPM. The tract at residues 801-821 is disordered; that stretch reads TPYSLSADGSPSSLGSSCDHR. Over residues 804-817 the composition is skewed to low complexity; the sequence is SLSADGSPSSLGSS. The YXXM motif 9 signature appears at 888–891; that stretch reads YTTM.

Post-translationally, phosphorylated by INSR.

Functionally, potentiates insulin signaling. The protein is Insulin receptor substrate 2-A (irs2-a) of Xenopus laevis (African clawed frog).